A 156-amino-acid chain; its full sequence is Small ribosomal subunit protein uS7 (156 aa).

Belongs to the universal ribosomal protein uS7 family. Part of the 30S ribosomal subunit. Contacts proteins S9 and S11.

Its function is as follows. One of the primary rRNA binding proteins, it binds directly to 16S rRNA where it nucleates assembly of the head domain of the 30S subunit. Is located at the subunit interface close to the decoding center, probably blocks exit of the E-site tRNA. The sequence is that of Small ribosomal subunit protein uS7 from Acetivibrio thermocellus (strain ATCC 27405 / DSM 1237 / JCM 9322 / NBRC 103400 / NCIMB 10682 / NRRL B-4536 / VPI 7372) (Clostridium thermocellum).